A 470-amino-acid polypeptide reads, in one-letter code: Cysteine--tRNA ligase (470 aa).

C28 serves as a coordination point for Zn(2+). A 'HIGH' region motif is present at residues 30-40 (PTVYNYIHIGN). Residues C212, H237, and E241 each contribute to the Zn(2+) site. Positions 271–275 (KMSKS) match the 'KMSKS' region motif. An ATP-binding site is contributed by K274.

It belongs to the class-I aminoacyl-tRNA synthetase family. As to quaternary structure, monomer. It depends on Zn(2+) as a cofactor.

It is found in the cytoplasm. The catalysed reaction is tRNA(Cys) + L-cysteine + ATP = L-cysteinyl-tRNA(Cys) + AMP + diphosphate. This Limosilactobacillus reuteri (strain DSM 20016) (Lactobacillus reuteri) protein is Cysteine--tRNA ligase.